We begin with the raw amino-acid sequence, 602 residues long: Threonine--tRNA ligase (602 aa).

The catalytic stretch occupies residues 208–499; sequence DHRKLGTELK…LTEHCAGEFP (292 aa). 3 residues coordinate Zn(2+): cysteine 300, histidine 351, and histidine 476.

Belongs to the class-II aminoacyl-tRNA synthetase family. As to quaternary structure, homodimer. Requires Zn(2+) as cofactor.

The protein resides in the cytoplasm. It carries out the reaction tRNA(Thr) + L-threonine + ATP = L-threonyl-tRNA(Thr) + AMP + diphosphate + H(+). In terms of biological role, catalyzes the attachment of threonine to tRNA(Thr) in a two-step reaction: L-threonine is first activated by ATP to form Thr-AMP and then transferred to the acceptor end of tRNA(Thr). Also edits incorrectly charged L-seryl-tRNA(Thr). The sequence is that of Threonine--tRNA ligase from Campylobacter jejuni subsp. jejuni serotype O:23/36 (strain 81-176).